A 178-amino-acid polypeptide reads, in one-letter code: Large ribosomal subunit protein uL6 (178 aa).

Belongs to the universal ribosomal protein uL6 family. In terms of assembly, part of the 50S ribosomal subunit.

Its function is as follows. This protein binds to the 23S rRNA, and is important in its secondary structure. It is located near the subunit interface in the base of the L7/L12 stalk, and near the tRNA binding site of the peptidyltransferase center. This is Large ribosomal subunit protein uL6 from Francisella tularensis subsp. tularensis (strain FSC 198).